Reading from the N-terminus, the 362-residue chain is P2Y purinoceptor 1 (362 aa).

Topologically, residues 1–40 are extracellular; that stretch reads MTEALISAALNGTQPELLAGGWAAGNATTKCSLTKTGFQF. Residues asparagine 11 and asparagine 26 are each glycosylated (N-linked (GlcNAc...) asparagine). Disulfide bonds link cysteine 31-cysteine 285 and cysteine 113-cysteine 191. Lysine 35 provides a ligand contact to ADP. A helical membrane pass occupies residues 41–63; the sequence is YYLPTVYILVFITGFLGNSVAIW. Topologically, residues 64–76 are cytoplasmic; the sequence is MFVFHMRPWSGIS. Residues 77 to 98 traverse the membrane as a helical segment; it reads VYMFNLALADFLYVLTLPALIF. Topologically, residues 99-114 are extracellular; sequence YYFNKTDWIFGDVMCK. An N-linked (GlcNAc...) asparagine glycan is attached at asparagine 102. Residues 115–136 form a helical membrane-spanning segment; that stretch reads LQRFIFHVNLYGSILFLTCISV. Residues 137–155 lie on the Cytoplasmic side of the membrane; the sequence is HRYTGVVHPLKSLGRLKKK. Residues 156–177 form a helical membrane-spanning segment; the sequence is NAVYVSSLVWALVVAVIAPILF. The Extracellular portion of the chain corresponds to 178 to 203; sequence YSGTGVRRNKTITCYDTTADEYLRSY. N-linked (GlcNAc...) asparagine glycosylation occurs at asparagine 186. ADP is bound at residue 192-194; the sequence is YDT. The helical transmembrane segment at 204–226 threads the bilayer; that stretch reads FVYSMCTTVFMFCIPFIVILGCY. Over 227–249 the chain is Cytoplasmic; sequence GLIVKALIYKDLDNSPLRRKSIY. A helical membrane pass occupies residues 250-273; sequence LVIIVLTVFAVSYLPFHVMKTLNL. Residues 272–276, 292–295, and arginine 299 each bind ADP; these read NLRAR and YATY. Residues 274–292 lie on the Extracellular side of the membrane; that stretch reads RARLDFQTPQMCAFNDKVY. A helical transmembrane segment spans residues 293–314; it reads ATYQVTRGLASLNSCVDPILYF. At 315–362 the chain is on the cytoplasmic side; sequence LAGDTFRRRLSRATRKSSRRSEPNVQSKSEEMTLNILTEYKQNGDTSL.

The protein belongs to the G-protein coupled receptor 1 family. As to expression, brain, spinal cord, gastrointestinal tract, spleen and leg muscle. Is not detected in the heart, liver, stomach, lung and kidney.

The protein resides in the cell membrane. Its function is as follows. Receptor for extracellular adenine nucleotides such as ADP. In platelets, binding to ADP leads to mobilization of intracellular calcium ions via activation of phospholipase C, a change in platelet shape, and ultimately platelet aggregation. The polypeptide is P2Y purinoceptor 1 (P2RY1) (Gallus gallus (Chicken)).